The primary structure comprises 93 residues: Small ribosomal subunit protein uS19 (93 aa).

It belongs to the universal ribosomal protein uS19 family.

Functionally, protein S19 forms a complex with S13 that binds strongly to the 16S ribosomal RNA. The sequence is that of Small ribosomal subunit protein uS19 from Latilactobacillus sakei subsp. sakei (strain 23K) (Lactobacillus sakei subsp. sakei).